Consider the following 359-residue polypeptide: 3-dehydroquinate synthase (359 aa).

Residues 71 to 76, 105 to 109, 129 to 130, Lys142, and Lys151 each bind NAD(+); these read DGEAYK, GVIGD, and TT. Zn(2+)-binding residues include Glu184, His247, and His264.

It belongs to the sugar phosphate cyclases superfamily. Dehydroquinate synthase family. Requires Co(2+) as cofactor. The cofactor is Zn(2+). NAD(+) is required as a cofactor.

The protein localises to the cytoplasm. The catalysed reaction is 7-phospho-2-dehydro-3-deoxy-D-arabino-heptonate = 3-dehydroquinate + phosphate. It participates in metabolic intermediate biosynthesis; chorismate biosynthesis; chorismate from D-erythrose 4-phosphate and phosphoenolpyruvate: step 2/7. Functionally, catalyzes the conversion of 3-deoxy-D-arabino-heptulosonate 7-phosphate (DAHP) to dehydroquinate (DHQ). This is 3-dehydroquinate synthase from Burkholderia vietnamiensis (strain G4 / LMG 22486) (Burkholderia cepacia (strain R1808)).